Consider the following 129-residue polypeptide: Tumor necrosis factor receptor superfamily member 12A (129 aa).

The signal sequence occupies residues 1–27; that stretch reads MARGSLRRLLRLLVLGLWLALLRSVAG. Over 28–80 the chain is Extracellular; the sequence is EQAPGTAPCSRGSSWSADLDKCMDCASCRARPHSDFCLGCAAAPPAPFRLLWP. Intrachain disulfides connect cysteine 36–cysteine 49, cysteine 52–cysteine 67, and cysteine 55–cysteine 64. A TNFR-Cys; atypical repeat occupies 36 to 67; it reads CSRGSSWSADLDKCMDCASCRARPHSDFCLGC. The helical transmembrane segment at 81–101 threads the bilayer; the sequence is ILGGALSLTFVLGLLSGFLVW. Residues 102–129 are Cytoplasmic-facing; it reads RRCRRREKFTTPIEETGGEGCPAVALIQ.

Associates with TRAF1 and TRAF2, and probably also with TRAF3. In terms of tissue distribution, highly expressed in heart, placenta and kidney. Intermediate expression in lung, skeletal muscle and pancreas.

The protein localises to the membrane. In terms of biological role, receptor for TNFSF12/TWEAK. Weak inducer of apoptosis in some cell types. Promotes angiogenesis and the proliferation of endothelial cells. May modulate cellular adhesion to matrix proteins. The polypeptide is Tumor necrosis factor receptor superfamily member 12A (TNFRSF12A) (Homo sapiens (Human)).